The sequence spans 210 residues: Fibrillarin-like rRNA/tRNA 2'-O-methyltransferase (210 aa).

S-adenosyl-L-methionine-binding positions include 70–71, 88–89, 113–114, and 133–136; these read TT, EY, DA, and DIAQ.

The protein belongs to the methyltransferase superfamily. Fibrillarin family. As to quaternary structure, interacts with nop5. Component of box C/D small ribonucleoprotein (sRNP) particles that contain rpl7ae, FlpA and nop5, plus a guide RNA.

Functionally, involved in pre-rRNA and tRNA processing. Utilizes the methyl donor S-adenosyl-L-methionine to catalyze the site-specific 2'-hydroxyl methylation of ribose moieties in rRNA and tRNA. Site specificity is provided by a guide RNA that base pairs with the substrate. Methylation occurs at a characteristic distance from the sequence involved in base pairing with the guide RNA. In Archaeoglobus fulgidus (strain ATCC 49558 / DSM 4304 / JCM 9628 / NBRC 100126 / VC-16), this protein is Fibrillarin-like rRNA/tRNA 2'-O-methyltransferase.